We begin with the raw amino-acid sequence, 442 residues long: MRLSRYFLPILKENPKEAEIVSHRLMLRSGMIRQQSAGIYSWLPIGLKVLNKVCDIIREEQNRAGANEILMPTIQSADLWRESGRYDAYGKEMLRIQDRQERDMLFGPTNEEMVTDIFRSYVRSYKDLPLNLYHIQWKFRDEVRPRFGVMRSREFLMKDAYSFDLDYEGAKMAYYRMFVSYLRTFARVGLQAIPMRADTGPIGGDLSHEFIILAETGESQVFCDKAYLDLAVPGADTDFRNDAQLTDIVNRWTTPYAATDEMHDEADWSKVKPEDQVSARGIEVGHIFHFGTKYSEPMGAKVQGPDGKEHLVSMGSYGIGPSRLVAAAIEAFHDDAGIIWPKAIAPFGAGIVNMKPGDEGCDAVSEKIYEALTNAGVDPLLDDTDDRPGAKFATMDLIGLPTQVIVGPRGVAAGEVEIKDRKTGERQSLSVEAAINLLTAEA.

This sequence belongs to the class-II aminoacyl-tRNA synthetase family. ProS type 2 subfamily. In terms of assembly, homodimer.

Its subcellular location is the cytoplasm. The enzyme catalyses tRNA(Pro) + L-proline + ATP = L-prolyl-tRNA(Pro) + AMP + diphosphate. Catalyzes the attachment of proline to tRNA(Pro) in a two-step reaction: proline is first activated by ATP to form Pro-AMP and then transferred to the acceptor end of tRNA(Pro). This Brucella anthropi (strain ATCC 49188 / DSM 6882 / CCUG 24695 / JCM 21032 / LMG 3331 / NBRC 15819 / NCTC 12168 / Alc 37) (Ochrobactrum anthropi) protein is Proline--tRNA ligase.